The following is a 699-amino-acid chain: Elongation factor G (699 aa).

One can recognise a tr-type G domain in the interval 8-287 (EKLRNIGIVA…AVIDYLPSPI (280 aa)). GTP is bound by residues 17-24 (AHIDAGKT), 85-89 (DTPGH), and 139-142 (NKMD).

Belongs to the TRAFAC class translation factor GTPase superfamily. Classic translation factor GTPase family. EF-G/EF-2 subfamily.

Its subcellular location is the cytoplasm. Functionally, catalyzes the GTP-dependent ribosomal translocation step during translation elongation. During this step, the ribosome changes from the pre-translocational (PRE) to the post-translocational (POST) state as the newly formed A-site-bound peptidyl-tRNA and P-site-bound deacylated tRNA move to the P and E sites, respectively. Catalyzes the coordinated movement of the two tRNA molecules, the mRNA and conformational changes in the ribosome. The polypeptide is Elongation factor G (fusA) (Aquifex aeolicus (strain VF5)).